We begin with the raw amino-acid sequence, 415 residues long: Transposase for insertion sequence element IS1081 (415 aa).

Belongs to the transposase mutator family.

Functionally, required for the transposition of the insertion element. This is Transposase for insertion sequence element IS1081 from Mycobacterium bovis (strain ATCC BAA-935 / AF2122/97).